The following is a 222-amino-acid chain: Germin-like protein subfamily 1 member 16 (222 aa).

Residues 1–22 (MRVSQSLIPFAIIALVLSFVNA) form the signal peptide. Cysteines 32 and 48 form a disulfide. The Cupin type-1 domain occupies 62-213 (SGLNVPGNTN…AFQLDANVVK (152 aa)). The N-linked (GlcNAc...) asparagine glycan is linked to N77. Positions 110, 112, 117, and 159 each coordinate Mn(2+).

Belongs to the germin family. Oligomer (believed to be a pentamer but probably hexamer).

It localises to the secreted. Its subcellular location is the extracellular space. The protein localises to the apoplast. May play a role in plant defense. Probably has no oxalate oxidase activity even if the active site is conserved. The chain is Germin-like protein subfamily 1 member 16 from Arabidopsis thaliana (Mouse-ear cress).